A 244-amino-acid chain; its full sequence is THO complex subunit 4A (244 aa).

A disordered region spans residues 1-82 (MSTGLDMSLD…EDHRSGRSSA (82 aa)). Ser2 is subject to N-acetylserine. Residues 21–35 (GGAGPARGTGSGSGP) are compositionally biased toward gly residues. Positions 67-77 (MFSDRSEDHRS) are enriched in basic and acidic residues. An RRM domain is found at 88-165 (TKLYISNLDY…KPMKIEIVGT (78 aa)). The tract at residues 169–244 (TAAAPSGRPA…KYHSGDMETN (76 aa)) is disordered. A compositionally biased stretch (gly residues) spans 187 to 211 (WRGGQGRGGQQRGGGRGGGGRGGGG). Residues 220–244 (PAEKISAEDLDADLDKYHSGDMETN) show a composition bias toward basic and acidic residues.

The protein belongs to the ALYREF family.

The protein localises to the nucleus. It is found in the nucleoplasm. Its subcellular location is the nucleolus. Its function is as follows. Export adapter involved in nuclear export of spliced and unspliced mRNA. This Arabidopsis thaliana (Mouse-ear cress) protein is THO complex subunit 4A (ALY1).